The chain runs to 128 residues: MKKIIATALIAGSAILGLSACTSDADVASENVSKAADNFEINRRIVFFNGITDKYLLEIQGRCSINADTASKKLDVTCKTKDGIKKHFLGLSDNVSYFMEQVDGANVSTDFYQVNFKPQAILPDIELR.

This is Gene 64 protein (64) from Mycobacterium phage L5 (Mycobacteriophage L5).